The chain runs to 446 residues: SPARC-related modular calcium-binding protein 2 (446 aa).

Positions 1-21 (MLLPQLCWLPLLAGLLPPVPA) are cleaved as a signal peptide. The Kazal-like domain maps to 34–86 (QDKDKDCSLDCAGSPQKPLCASDGRTFLSRCEFQRAKCKDPQLEIAYRGNCKD). Intrachain disulfides connect Cys40–Cys71, Cys44–Cys64, Cys53–Cys84, Cys90–Cys113, Cys124–Cys131, and Cys133–Cys153. A Thyroglobulin type-1 1 domain is found at 87–153 (VSRCVAERKY…TAVAHKTPRC (67 aa)). The disordered stretch occupies residues 147-228 (AHKTPRCPGS…EHQSALEEAK (82 aa)). Basic and acidic residues predominate over residues 161–172 (LPQREGTGKTDD). N-linked (GlcNAc...) asparagine glycosylation occurs at Asn206. Positions 206-216 (NKTNKNSVSSC) are enriched in polar residues. The Thyroglobulin type-1 2 domain occupies 213–281 (VSSCDQEHQS…TSTRYEQPKC (69 aa)). 3 disulfides stabilise this stretch: Cys216–Cys240, Cys251–Cys258, and Cys260–Cys281. The span at 217 to 228 (DQEHQSALEEAK) shows a compositional bias: basic and acidic residues. EF-hand domains are found at residues 347–382 (LEER…LRKK) and 384–419 (KPKK…AKED). The Ca(2+) site is built by Asp360, Asn362, Ser364, Asp366, Glu371, Asp397, Asn399, Asp401, Ser403, and Glu408. N-linked (GlcNAc...) asparagine glycosylation is present at Asn362. Residues 416 to 446 (AKEDGKADTKKRHTPRGHAESTSNRQPRKQG) form a disordered region.

Binds various proteins from the extracellular matrix.

The protein localises to the secreted. Its subcellular location is the extracellular space. The protein resides in the extracellular matrix. It localises to the basement membrane. Promotes matrix assembly and cell adhesiveness. Can stimulate endothelial cell proliferation, migration, as well as angiogenesis. This is SPARC-related modular calcium-binding protein 2 (SMOC2) from Homo sapiens (Human).